A 271-amino-acid chain; its full sequence is Mannosyl-3-phosphoglycerate phosphatase (271 aa).

The active-site Nucleophile is the Asp13. The Mg(2+) site is built by Asp13, Asp15, and Asp214.

It belongs to the HAD-like hydrolase superfamily. MPGP family. The cofactor is Mg(2+).

It localises to the cytoplasm. The catalysed reaction is 2-O-(alpha-D-mannosyl)-3-phosphoglycerate + H2O = (2R)-2-O-(alpha-D-mannosyl)-glycerate + phosphate. This chain is Mannosyl-3-phosphoglycerate phosphatase, found in Escherichia coli (strain K12 / DH10B).